Here is a 146-residue protein sequence, read N- to C-terminus: Protein SprT-like (146 aa).

Residues 4-142 (NEYVKQVSLE…GRCKGKLRLL (139 aa)) form the SprT-like domain. Residue His64 coordinates Zn(2+). Glu65 is an active-site residue. His68 lines the Zn(2+) pocket.

It belongs to the SprT family. Zn(2+) is required as a cofactor.

The protein resides in the cytoplasm. This chain is Protein SprT-like, found in Streptococcus gordonii (strain Challis / ATCC 35105 / BCRC 15272 / CH1 / DL1 / V288).